Here is a 417-residue protein sequence, read N- to C-terminus: Squalene synthase (417 aa).

The NADP(+) site is built by arginine 52 and arginine 77. Residues aspartate 80, glutamate 83, and aspartate 84 each contribute to the Mg(2+) site. Arginine 218 is a binding site for NADP(+). Residues 284–304 (SIFNFCAIPQVMAIATLAACY) traverse the membrane as a helical segment. 2 residues coordinate NADP(+): lysine 315 and arginine 317. The chain crosses the membrane as a helical span at residues 384–404 (PIYLSFVMLLAALSWQYLSTL).

Belongs to the phytoene/squalene synthase family. Mg(2+) is required as a cofactor.

Its subcellular location is the endoplasmic reticulum membrane. It catalyses the reaction 2 (2E,6E)-farnesyl diphosphate + NADPH + H(+) = squalene + 2 diphosphate + NADP(+). The enzyme catalyses 2 (2E,6E)-farnesyl diphosphate + NADH + H(+) = squalene + 2 diphosphate + NAD(+). It carries out the reaction presqualene diphosphate + NADH + H(+) = squalene + diphosphate + NAD(+). The catalysed reaction is presqualene diphosphate + NADPH + H(+) = squalene + diphosphate + NADP(+). It catalyses the reaction 2 (2E,6E)-farnesyl diphosphate = presqualene diphosphate + diphosphate. Its pathway is terpene metabolism; lanosterol biosynthesis; lanosterol from farnesyl diphosphate: step 1/3. Functionally, catalyzes the condensation of 2 farnesyl pyrophosphate (FPP) moieties to form squalene. Proceeds in two distinct steps. In the first half-reaction, two molecules of FPP react to form the stable presqualene diphosphate intermediate (PSQPP), with concomitant release of a proton and a molecule of inorganic diphosphate. In the second half-reaction, PSQPP undergoes heterolysis, isomerization, and reduction with NADPH or NADH to form squalene. It is the first committed enzyme of the sterol biosynthesis pathway. The polypeptide is Squalene synthase (FDFT1) (Bos taurus (Bovine)).